The sequence spans 137 residues: MIYIPKKIRYRKHHRGRLKGVASKGNNLFFASCGLQALESSWITSQQMEAARRACTRKVKRHGKLFMRFFPDKPVTYRSAETRMGSGKGTPRDWVAVIKPGKILYELKGIPEPLARKALKLASAKLPLKTKFIFKKE.

Belongs to the universal ribosomal protein uL16 family. Part of the 50S ribosomal subunit.

Its subcellular location is the plastid. This chain is Large ribosomal subunit protein uL16c (rpl16), found in Helicosporidium sp. subsp. Simulium jonesii (Green alga).